Reading from the N-terminus, the 235-residue chain is Caveolin-1 (235 aa).

The Cytoplasmic portion of the chain corresponds to 1-161; the sequence is MSTEQDIKTE…LVSLLALPFT (161 aa). The tract at residues 29–72 is disordered; sequence GEAVVAPEEPKPKKNWFTFGKKKAAPTDETNIEEGGAPGDEPVK. The segment at residues 162–182 is an intramembrane region (helical); it reads IIFAIFFGLLASINVFIIVPL. Topologically, residues 183–235 are cytoplasmic; sequence GKLLSIPGTLLAKLWNWLIHAIFDPIASAVGLIFSNFNIRKYGINQETTAPCV. C234 is lipidated: S-palmitoyl cysteine.

This sequence belongs to the caveolin family. As to quaternary structure, homooligomer containing 14-16 monomers per oligomer.

The protein localises to the golgi apparatus membrane. It localises to the cell membrane. The protein resides in the membrane. It is found in the caveola. Its function is as follows. May act as a scaffolding protein within caveolar membranes. Interacts directly with G-protein alpha subunits and can functionally regulate their activity. This is Caveolin-1 (cav-1) from Caenorhabditis elegans.